The following is a 391-amino-acid chain: ATPase GET3C (391 aa).

A mitochondrion-targeting transit peptide spans 1-50 (MAALLLLNRVSRSTSSISLHRVAGTLGFNSFNAQIHGDRISGTLFRVRSL). ATP is bound at residue 77 to 84 (KGGVGKTS). The active site involves D106. ATP is bound at residue N328.

Belongs to the arsA ATPase family.

It localises to the mitochondrion matrix. The catalysed reaction is ATP + H2O = ADP + phosphate + H(+). The protein is ATPase GET3C of Arabidopsis thaliana (Mouse-ear cress).